The sequence spans 364 residues: MTQRWGPQRLAGGQPQAGLEESTQASIFTYTNSNATRDPFEGPNYHIAPRWVYHLTSAWMIFVVIASVFTNGLVLVATMRFKKLRHPLNWILVNLAIADLAETIIASTISVVNQIYGYFVLGHPLCVVEGYTVSLCGITGLWSLAIISWERWLVVCKPFGNVRFDAKLAIAGIAFSWIWAAVWTAPPIFGWSRYWPHGLKTSCGPDVFSGSSYPGVQSYMIVLMTTCCIIPLSVIILCYLQVWLAIRAVAKQQKESESTQKAEKEVTRMVVVMVLAYCLCWGPYTFFACFAAAHPGYAFHPLVAALPAYFAKSATIYNPIIYVFMNRQFRNCILQLFGKKVDDSSELSSASRTEASSVSSVSPA.

The Extracellular portion of the chain corresponds to 1–58 (MTQRWGPQRLAGGQPQAGLEESTQASIFTYTNSNATRDPFEGPNYHIAPRWVYHLTSA). O-linked (GlcNAc) serine glycosylation is present at serine 22. Asparagine 34 carries an N-linked (GlcNAc...) asparagine glycan. Residues 59–79 (WMIFVVIASVFTNGLVLVATM) traverse the membrane as a helical segment. The Cytoplasmic portion of the chain corresponds to 80-90 (RFKKLRHPLNW). The chain crosses the membrane as a helical span at residues 91 to 111 (ILVNLAIADLAETIIASTISV). The Extracellular segment spans residues 112–126 (VNQIYGYFVLGHPLC). The cysteines at positions 126 and 203 are disulfide-linked. Residues 127–147 (VVEGYTVSLCGITGLWSLAII) traverse the membrane as a helical segment. Residues 148–168 (SWERWLVVCKPFGNVRFDAKL) are Cytoplasmic-facing. The chain crosses the membrane as a helical span at residues 169 to 189 (AIAGIAFSWIWAAVWTAPPIF). The Extracellular segment spans residues 190-219 (GWSRYWPHGLKTSCGPDVFSGSSYPGVQSY). The chain crosses the membrane as a helical span at residues 220–240 (MIVLMTTCCIIPLSVIILCYL). The Cytoplasmic segment spans residues 241-269 (QVWLAIRAVAKQQKESESTQKAEKEVTRM). Residues 270 to 290 (VVVMVLAYCLCWGPYTFFACF) traverse the membrane as a helical segment. Residues 291–301 (AAAHPGYAFHP) are Extracellular-facing. Residues 302–324 (LVAALPAYFAKSATIYNPIIYVF) traverse the membrane as a helical segment. Residue lysine 312 is modified to N6-(retinylidene)lysine. Residues 325-364 (MNRQFRNCILQLFGKKVDDSSELSSASRTEASSVSSVSPA) are Cytoplasmic-facing.

It belongs to the G-protein coupled receptor 1 family. Opsin subfamily. Phosphorylated on some or all of the serine and threonine residues present in the C-terminal region. In terms of tissue distribution, the three color pigments are found in the cone photoreceptor cells.

The protein resides in the membrane. Functionally, visual pigments are the light-absorbing molecules that mediate vision. They consist of an apoprotein, opsin, covalently linked to cis-retinal. The polypeptide is Long-wave-sensitive opsin 1 (OPN1LW) (Canis lupus familiaris (Dog)).